A 275-amino-acid polypeptide reads, in one-letter code: Apoptosis inhibitor 1 (275 aa).

2 BIR repeats span residues Leu-24–Ala-91 and Pro-126–Val-193. Residues Cys-163, Cys-166, His-183, and Cys-190 each coordinate Zn(2+). The segment at Cys-227–Arg-263 adopts an RING-type zinc-finger fold.

Functionally, acts by blocking cellular apoptosis rather than by preventing viral stimulation of apoptosis. This Orgyia pseudotsugata (Douglas-fir tussock moth) protein is Apoptosis inhibitor 1 (IAP1).